The following is a 273-amino-acid chain: NADPH-dependent 7-cyano-7-deazaguanine reductase (273 aa).

80–82 (VES) is a substrate binding site. Position 82 to 83 (82 to 83 (SK)) interacts with NADPH. Cys180 acts as the Thioimide intermediate in catalysis. The active-site Proton donor is Asp187. 219-220 (HE) serves as a coordination point for substrate. Residue 248-249 (RG) participates in NADPH binding.

The protein belongs to the GTP cyclohydrolase I family. QueF type 2 subfamily. Homodimer.

Its subcellular location is the cytoplasm. The enzyme catalyses 7-aminomethyl-7-carbaguanine + 2 NADP(+) = 7-cyano-7-deazaguanine + 2 NADPH + 3 H(+). It functions in the pathway tRNA modification; tRNA-queuosine biosynthesis. Catalyzes the NADPH-dependent reduction of 7-cyano-7-deazaguanine (preQ0) to 7-aminomethyl-7-deazaguanine (preQ1). This chain is NADPH-dependent 7-cyano-7-deazaguanine reductase, found in Bordetella bronchiseptica (strain ATCC BAA-588 / NCTC 13252 / RB50) (Alcaligenes bronchisepticus).